The following is a 316-amino-acid chain: Olfactory receptor 6B9 (316 aa).

Residues 1–22 are Extracellular-facing; the sequence is MENITNISEFILMGFPTAPWLQ. Residues Asn3 and Asn6 are each glycosylated (N-linked (GlcNAc...) asparagine). Residues 23–43 traverse the membrane as a helical segment; sequence ILLFSIFFITYVFVLLENLVI. The Cytoplasmic portion of the chain corresponds to 44 to 64; the sequence is ILTVWVTGSLHKPMYYFLSTM. Residues 65 to 85 form a helical membrane-spanning segment; sequence SFLEAWYISVTVPKMLAGFLF. Topologically, residues 86–97 are extracellular; sequence RPNTISFLGCMT. Cys95 and Cys187 are joined by a disulfide. The helical transmembrane segment at 98 to 118 threads the bilayer; sequence QLYFFMSLACTECVLLAAMAY. The Cytoplasmic segment spans residues 119-132; that stretch reads DRYVAICWPLRYPV. Residues 133 to 153 form a helical membrane-spanning segment; the sequence is MMTTGFCVQLTISSWVSGFTI. Residues 154-199 lie on the Extracellular side of the membrane; it reads SMAKVYFISRVAFCGNNVLNHFFCDVSPILKLACMNLSMAETVDFA. The helical transmembrane segment at 200-220 threads the bilayer; it reads LAIVILIFPLSATVLSYGFIV. Over 221 to 237 the chain is Cytoplasmic; that stretch reads STVLQIPSATGQRKAFS. Residues 238–258 form a helical membrane-spanning segment; that stretch reads TCASHLTVVVIFYTAVIFMYV. Residues 259 to 269 are Extracellular-facing; the sequence is RPRAIASFNSN. A helical transmembrane segment spans residues 270–290; sequence KLISAIYAVFTPMLNPIIYCL. The Cytoplasmic segment spans residues 291-316; sequence RNKEVKDAIRKTIAGGRAPALGESIS.

The protein belongs to the G-protein coupled receptor 1 family. In terms of tissue distribution, olfactory epithelium.

Its subcellular location is the cell membrane. Its function is as follows. Odorant receptor. The polypeptide is Olfactory receptor 6B9 (Mus musculus (Mouse)).